Consider the following 162-residue polypeptide: 2-C-methyl-D-erythritol 2,4-cyclodiphosphate synthase (162 aa).

Residues Asp8 and His10 each coordinate a divalent metal cation. 4-CDP-2-C-methyl-D-erythritol 2-phosphate is bound by residues 8 to 10 (DVH) and 34 to 35 (HS). His42 is a binding site for a divalent metal cation. 4-CDP-2-C-methyl-D-erythritol 2-phosphate is bound by residues 56–58 (DIG), 61–65 (FPDND), 132–135 (TTTE), Phe139, and Lys142.

It belongs to the IspF family. Homotrimer. Requires a divalent metal cation as cofactor.

The catalysed reaction is 4-CDP-2-C-methyl-D-erythritol 2-phosphate = 2-C-methyl-D-erythritol 2,4-cyclic diphosphate + CMP. Its pathway is isoprenoid biosynthesis; isopentenyl diphosphate biosynthesis via DXP pathway; isopentenyl diphosphate from 1-deoxy-D-xylulose 5-phosphate: step 4/6. Its function is as follows. Involved in the biosynthesis of isopentenyl diphosphate (IPP) and dimethylallyl diphosphate (DMAPP), two major building blocks of isoprenoid compounds. Catalyzes the conversion of 4-diphosphocytidyl-2-C-methyl-D-erythritol 2-phosphate (CDP-ME2P) to 2-C-methyl-D-erythritol 2,4-cyclodiphosphate (ME-CPP) with a corresponding release of cytidine 5-monophosphate (CMP). The chain is 2-C-methyl-D-erythritol 2,4-cyclodiphosphate synthase from Pelotomaculum thermopropionicum (strain DSM 13744 / JCM 10971 / SI).